The chain runs to 302 residues: Eukaryotic translation initiation factor 3 subunit F (302 aa).

In terms of domain architecture, MPN spans 23-165 (IVIEPAVLFS…IKTYVSSPVG (143 aa)). S162 carries the phosphoserine modification.

The protein belongs to the eIF-3 subunit F family. Component of the eukaryotic translation initiation factor 3 (eIF-3) complex. The eIF-3 complex appears to include tif32/eif3a, SPAC25G10.08/eif3b, tif33/eif3c, SPBC4C3.07/eif3f, tif35/eif3g and sum1/eif3i. This set of common subunits may also associate exclusively with either moe1/eif3d and int6/eif3e, or with SPAC821.05/eif3h and SPAC1751.03/eif3m. The eIF-3 complex may also include SPAC3A12.13c/eif3j.

It is found in the cytoplasm. Functionally, component of the eukaryotic translation initiation factor 3 (eIF-3) complex, which is involved in protein synthesis of a specialized repertoire of mRNAs and, together with other initiation factors, stimulates binding of mRNA and methionyl-tRNAi to the 40S ribosome. The eIF-3 complex specifically targets and initiates translation of a subset of mRNAs involved in cell proliferation. The protein is Eukaryotic translation initiation factor 3 subunit F of Schizosaccharomyces pombe (strain 972 / ATCC 24843) (Fission yeast).